The following is a 176-amino-acid chain: Large ribosomal subunit protein bL17m (176 aa).

The N-terminal 8 residues, 1 to 8, are a transit peptide targeting the mitochondrion; that stretch reads MRLSLAAA.

Belongs to the bacterial ribosomal protein bL17 family. As to quaternary structure, component of the mitochondrial ribosome large subunit (39S) which comprises a 16S rRNA and about 50 distinct proteins.

It is found in the mitochondrion. This Mus musculus (Mouse) protein is Large ribosomal subunit protein bL17m (Mrpl17).